The chain runs to 241 residues: Platelet-derived growth factor subunit B (241 aa).

The N-terminal stretch at 1–20 (MNRCWALFLPLCCYLRLVSA) is a signal peptide. A propeptide spans 21-81 (EGDPIPEELY…ELESSSRGRR (61 aa)) (removed in mature form). A glycan (N-linked (GlcNAc...) asparagine) is linked at Asn-63. Intrachain disulfides connect Cys-97–Cys-141, Cys-130–Cys-178, and Cys-134–Cys-180. The propeptide at 191 to 241 (RSPGTSREQRAKTPQARVTIRTVRIRRPPKGKHRKFKHTHDKAALKETLGA) is removed in mature form. Over residues 217-230 (RPPKGKHRKFKHTH) the composition is skewed to basic residues. A disordered region spans residues 217 to 241 (RPPKGKHRKFKHTHDKAALKETLGA).

Belongs to the PDGF/VEGF growth factor family. In terms of assembly, antiparallel homodimer; disulfide-linked. Antiparallel heterodimer with PDGFA; disulfide-linked. The PDGFB homodimer interacts with PDGFRA and PDGFRB homodimers, and with heterodimers formed by PDGFRA and PDGFRB. The heterodimer composed of PDGFA and PDGFB interacts with PDGFRB homodimers, and with heterodimers formed by PDGFRA and PDGFRB. Interacts with XLKD1. Interacts with LRP1. Interacts with SORL1 (via the N-terminal ectodomain). Interacts with CD82; this interaction inhibits PDGFB-mediated signaling pathway. In terms of tissue distribution, localized to vascular smooth muscle cells. Also weakly expressed by cortical interstitial cells but absent in tubules. Up-regulated in areas of renal fibrosis. In mice with unilateral ureteral obstruction, an increased expression in interstitial cells and in some tubules observed after day 4.

It is found in the secreted. Its function is as follows. Growth factor that plays an essential role in the regulation of embryonic development, cell proliferation, cell migration, survival and chemotaxis. Potent mitogen for cells of mesenchymal origin. Required for normal proliferation and recruitment of pericytes and vascular smooth muscle cells in the central nervous system, skin, lung, heart and placenta. Required for normal blood vessel development, and for normal development of kidney glomeruli. Plays an important role in wound healing. Signaling is modulated by the formation of heterodimers with PDGFA. The protein is Platelet-derived growth factor subunit B (Pdgfb) of Mus musculus (Mouse).